The primary structure comprises 173 residues: C-phycocyanin beta subunit (173 aa).

Residue Asn-73 is modified to N4-methylasparagine. (2R,3E)-phycocyanobilin contacts are provided by Cys-83 and Cys-154.

It belongs to the phycobiliprotein family. As to quaternary structure, heterodimer of an alpha and a beta subunit. Part of 2 PBS rod complexes, the conventional PBS rod and a photosystem I-specific CpcL-PBS rod. Contains two covalently linked bilin chromophores.

It localises to the cellular thylakoid membrane. Its function is as follows. Light-harvesting photosynthetic bile pigment-protein from the phycobiliprotein complex (phycobilisome, PBS). Phycocyanin is the major phycobiliprotein in the PBS rod. This is C-phycocyanin beta subunit (cpcB) from Nostoc sp. (strain PCC 7120 / SAG 25.82 / UTEX 2576).